The chain runs to 451 residues: Chromosomal replication initiator protein DnaA (451 aa).

Positions 1 to 82 are domain I, interacts with DnaA modulators; sequence MENSLWKQCL…RLELQIGSSA (82 aa). Positions 82-114 are domain II; the sequence is AVVAPPRRRQVSVTTPSPSAAADQTPATRSAAS. Positions 85-112 are disordered; that stretch reads APPRRRQVSVTTPSPSAAADQTPATRSA. Positions 115–331 are domain III, AAA+ region; the sequence is NLNSNFTFDT…GALRRVVANA (217 aa). ATP contacts are provided by G159, G161, K162, and T163. The segment at 332–451 is domain IV, binds dsDNA; sequence QFTGQEITVE…YSNLLRTLST (120 aa).

This sequence belongs to the DnaA family. In terms of assembly, oligomerizes as a right-handed, spiral filament on DNA at oriC.

It localises to the cytoplasm. In terms of biological role, plays an essential role in the initiation and regulation of chromosomal replication. ATP-DnaA binds to the origin of replication (oriC) to initiate formation of the DNA replication initiation complex once per cell cycle. Binds the DnaA box (a 9 base pair repeat at the origin) and separates the double-stranded (ds)DNA. Forms a right-handed helical filament on oriC DNA; dsDNA binds to the exterior of the filament while single-stranded (ss)DNA is stabiized in the filament's interior. The ATP-DnaA-oriC complex binds and stabilizes one strand of the AT-rich DNA unwinding element (DUE), permitting loading of DNA polymerase. After initiation quickly degrades to an ADP-DnaA complex that is not apt for DNA replication. Binds acidic phospholipids. The sequence is that of Chromosomal replication initiator protein DnaA from Alkalilimnicola ehrlichii (strain ATCC BAA-1101 / DSM 17681 / MLHE-1).